A 259-amino-acid chain; its full sequence is Proteasome assembly chaperone 2 (259 aa).

It belongs to the PSMG2 family. Forms a heterodimer with psmg1. In terms of processing, degraded by the proteasome upon completion of 20S proteasome maturation.

It is found in the nucleus. Its function is as follows. Chaperone protein which promotes assembly of the 20S proteasome as part of a heterodimer with psmg1. In Xenopus laevis (African clawed frog), this protein is Proteasome assembly chaperone 2.